Consider the following 490-residue polypeptide: MSTLKQRKEDFVTGLNGGSITEINAVTSIALVTYISWNLLKNSNLMPPGISSVQYIIDFALNWVALLLSITIYASEPYLLNTLILLPCLLAFIYGKFTSSSKPSNPIYNKKKMITQRFQLEKKPYITAYRGGMLILTAIAILAVDFPIFPRRFAKVETWGTSLMDLGVGSFVFSNGIVSSRALLKNLSLKSKPSFLKNAFNALKSGGTLLFLGLLRLFFVKNLEYQEHVTEYGVHWNFFITLSLLPLVLTFIDPVTRMVPRCSIAIFISCIYEWLLLKDDRTLNFLILADRNCFFSANREGIFSFLGYCSIFLWGQNTGFYLLGNKPTLNNLYKPSTQDVVAASKKSSTWDYWTSVTPLSGLCIWSTIFLVISQLVFQYHPYSVSRRFANLPYTLWVITYNLLFLTGYCLTDKIFGNSSEYYKVAECLESINSNGLFLFLLANVSTGLVNMSMVTIDSSPLKSFLVLLAYCSFIAVISVFLYRKRIFIKL.

Over 1–19 (MSTLKQRKEDFVTGLNGGS) the chain is Lumenal. A helical transmembrane segment spans residues 20 to 40 (ITEINAVTSIALVTYISWNLL). The Cytoplasmic portion of the chain corresponds to 41–54 (KNSNLMPPGISSVQ). A helical transmembrane segment spans residues 55–75 (YIIDFALNWVALLLSITIYAS). A topological domain (lumenal) is located at residue Glu76. Residues 77 to 97 (PYLLNTLILLPCLLAFIYGKF) traverse the membrane as a helical segment. Topologically, residues 98 to 128 (TSSSKPSNPIYNKKKMITQRFQLEKKPYITA) are cytoplasmic. A helical membrane pass occupies residues 129-149 (YRGGMLILTAIAILAVDFPIF). Residues 150-157 (PRRFAKVE) lie on the Lumenal side of the membrane. A helical transmembrane segment spans residues 158–178 (TWGTSLMDLGVGSFVFSNGIV). At 179 to 199 (SSRALLKNLSLKSKPSFLKNA) the chain is on the cytoplasmic side. The helical transmembrane segment at 200–220 (FNALKSGGTLLFLGLLRLFFV) threads the bilayer. The Lumenal segment spans residues 221–231 (KNLEYQEHVTE). The chain crosses the membrane as a helical span at residues 232 to 252 (YGVHWNFFITLSLLPLVLTFI). The Cytoplasmic portion of the chain corresponds to 253–257 (DPVTR). Residues 258–278 (MVPRCSIAIFISCIYEWLLLK) traverse the membrane as a helical segment. At 279 to 301 (DDRTLNFLILADRNCFFSANREG) the chain is on the lumenal side. A helical transmembrane segment spans residues 302-322 (IFSFLGYCSIFLWGQNTGFYL). Over 323 to 356 (LGNKPTLNNLYKPSTQDVVAASKKSSTWDYWTSV) the chain is Cytoplasmic. A helical membrane pass occupies residues 357 to 377 (TPLSGLCIWSTIFLVISQLVF). Topologically, residues 378–390 (QYHPYSVSRRFAN) are lumenal. Residues 391–411 (LPYTLWVITYNLLFLTGYCLT) form a helical membrane-spanning segment. Over 412–435 (DKIFGNSSEYYKVAECLESINSNG) the chain is Cytoplasmic. A helical membrane pass occupies residues 436 to 456 (LFLFLLANVSTGLVNMSMVTI). Over 457-460 (DSSP) the chain is Lumenal. A helical transmembrane segment spans residues 461–481 (LKSFLVLLAYCSFIAVISVFL). At 482-490 (YRKRIFIKL) the chain is on the cytoplasmic side.

Belongs to the PIGW family.

It localises to the endoplasmic reticulum membrane. It participates in glycolipid biosynthesis; glycosylphosphatidylinositol-anchor biosynthesis. Functionally, probable acetyltransferase, which acetylates the inositol ring of phosphatidylinositol during biosynthesis of GPI-anchor. Acetylation during GPI-anchor biosynthesis is not essential for the subsequent mannosylation and is usually removed soon after the attachment of GPIs to proteins. This Saccharomyces cerevisiae (strain ATCC 204508 / S288c) (Baker's yeast) protein is GPI-anchored wall transfer protein 1 (GWT1).